A 116-amino-acid polypeptide reads, in one-letter code: U11-theraphotoxin-Hhn1b (116 aa).

The N-terminal stretch at 1 to 21 (MNTVRVTFLLVFVLAVSLGQA) is a signal peptide. The propeptide occupies 22-74 (DKDENRMEMQEKTEQGKSYLDFAENLLLQKLEELEAKLLEEDSEESRNSRQKR). Positions 60 to 69 (LEEDSEESRN) are enriched in basic and acidic residues. The tract at residues 60–83 (LEEDSEESRNSRQKRCIGEGVPCD) is disordered. Disulfide bonds link cysteine 75-cysteine 90, cysteine 82-cysteine 95, and cysteine 89-cysteine 110.

This sequence belongs to the neurotoxin 14 (magi-1) family. 01 (HNTX-16) subfamily. In terms of tissue distribution, expressed by the venom gland.

It is found in the secreted. Its function is as follows. Probable ion channel inhibitor. This is U11-theraphotoxin-Hhn1b from Cyriopagopus hainanus (Chinese bird spider).